A 430-amino-acid chain; its full sequence is BSD domain-containing protein 1 (430 aa).

Phosphoserine occurs at positions 92 and 166. One can recognise a BSD domain in the interval 146 to 198 (WLSQFCLEEKKGEISELLVGSPSIRALYTKMVPAAVSHSEFWHRYFYKVHQLE). 2 disordered regions span residues 247–298 (STFP…APEA) and 319–398 (LAVD…WEKD). Residues 276–291 (PSESSESISLVTQIAN) are compositionally biased toward polar residues. Residues 350 to 367 (PPARVETLREEAPTDLRV) are compositionally biased toward basic and acidic residues. Thr356 bears the Phosphothreonine mark. Polar residues predominate over residues 371–390 (NSDSGKSTPSNNGKKGSSTD). Phosphoserine occurs at positions 387, 388, and 418.

The polypeptide is BSD domain-containing protein 1 (BSDC1) (Homo sapiens (Human)).